The following is a 353-amino-acid chain: S-adenosylmethionine:tRNA ribosyltransferase-isomerase (353 aa).

This sequence belongs to the QueA family. In terms of assembly, monomer.

The protein localises to the cytoplasm. It catalyses the reaction 7-aminomethyl-7-carbaguanosine(34) in tRNA + S-adenosyl-L-methionine = epoxyqueuosine(34) in tRNA + adenine + L-methionine + 2 H(+). It participates in tRNA modification; tRNA-queuosine biosynthesis. Transfers and isomerizes the ribose moiety from AdoMet to the 7-aminomethyl group of 7-deazaguanine (preQ1-tRNA) to give epoxyqueuosine (oQ-tRNA). The chain is S-adenosylmethionine:tRNA ribosyltransferase-isomerase from Marinomonas sp. (strain MWYL1).